The chain runs to 230 residues: Cytidylate kinase (230 aa).

Position 12–20 (12–20 (GPSGAGKGT)) interacts with ATP.

Belongs to the cytidylate kinase family. Type 1 subfamily.

It is found in the cytoplasm. The catalysed reaction is CMP + ATP = CDP + ADP. It catalyses the reaction dCMP + ATP = dCDP + ADP. The protein is Cytidylate kinase of Shewanella oneidensis (strain ATCC 700550 / JCM 31522 / CIP 106686 / LMG 19005 / NCIMB 14063 / MR-1).